Here is a 494-residue protein sequence, read N- to C-terminus: Alpha-amylase-related protein (494 aa).

Positions 1–20 are cleaved as a signal peptide; the sequence is MIKFALALTLCLAGASLSLA. Glutamine 21 carries the post-translational modification Pyrrolidone carboxylic acid. Cysteine 48 and cysteine 104 form a disulfide bridge. 3 residues coordinate Ca(2+): asparagine 118, glutamine 169, and aspartate 178. The cysteines at positions 157 and 171 are disulfide-linked. Residue arginine 206 participates in chloride binding. Aspartate 208 serves as the catalytic Nucleophile. Position 212 (histidine 212) interacts with Ca(2+). Glutamate 245 serves as the catalytic Proton donor. Residues asparagine 308 and arginine 343 each contribute to the chloride site. 3 disulfides stabilise this stretch: cysteine 376–cysteine 382, cysteine 418–cysteine 441, and cysteine 448–cysteine 460.

Belongs to the glycosyl hydrolase 13 family. Monomer. Ca(2+) serves as cofactor. It depends on chloride as a cofactor.

It localises to the secreted. The catalysed reaction is Endohydrolysis of (1-&gt;4)-alpha-D-glucosidic linkages in polysaccharides containing three or more (1-&gt;4)-alpha-linked D-glucose units.. The polypeptide is Alpha-amylase-related protein (Amyrel) (Drosophila kikkawai (Fruit fly)).